A 532-amino-acid polypeptide reads, in one-letter code: tRNA-2-methylthio-N(6)-dimethylallyladenosine synthase (532 aa).

The tract at residues 1 to 21 (MTSTVAHGAGSAGPADDVEPM) is disordered. Residues 24–140 (RTYQVRTYGC…LPALLDRARH (117 aa)) form the MTTase N-terminal domain. [4Fe-4S] cluster is bound by residues cysteine 33, cysteine 69, cysteine 103, cysteine 177, cysteine 181, and cysteine 184. Residues 163 to 399 (RESAYAAWVS…VELQEQISLE (237 aa)) form the Radical SAM core domain. The TRAM domain maps to 402–470 (RAIVGQRVEL…PHHLIADGGI (69 aa)). The segment at 510 to 532 (TSCGSAGGCGSADGAGSSAGDPQ) is disordered. Positions 523–532 (GAGSSAGDPQ) are enriched in low complexity.

The protein belongs to the methylthiotransferase family. MiaB subfamily. In terms of assembly, monomer. [4Fe-4S] cluster serves as cofactor.

The protein localises to the cytoplasm. It catalyses the reaction N(6)-dimethylallyladenosine(37) in tRNA + (sulfur carrier)-SH + AH2 + 2 S-adenosyl-L-methionine = 2-methylsulfanyl-N(6)-dimethylallyladenosine(37) in tRNA + (sulfur carrier)-H + 5'-deoxyadenosine + L-methionine + A + S-adenosyl-L-homocysteine + 2 H(+). Its function is as follows. Catalyzes the methylthiolation of N6-(dimethylallyl)adenosine (i(6)A), leading to the formation of 2-methylthio-N6-(dimethylallyl)adenosine (ms(2)i(6)A) at position 37 in tRNAs that read codons beginning with uridine. This is tRNA-2-methylthio-N(6)-dimethylallyladenosine synthase from Mycobacterium ulcerans (strain Agy99).